Here is an 808-residue protein sequence, read N- to C-terminus: Receptor like protein 27 (808 aa).

An N-terminal signal peptide occupies residues 1 to 31; sequence MLFFIKVFMKTILSVLLLFFIFASSFTLVVG. The Extracellular segment spans residues 32–740; sequence LAGCRPDQIQ…DEDEEVLNWK (709 aa). Asparagine 56, asparagine 68, asparagine 90, asparagine 103, asparagine 108, asparagine 144, and asparagine 167 each carry an N-linked (GlcNAc...) asparagine glycan. LRR repeat units lie at residues 96–120, 122–144, 145–170, 172–192, 193–218, 220–241, 242–265, 266–291, 293–314, 315–338, 340–363, and 364–387; these read LQHL…GFGN, NRLE…SFSN, LSQL…NLTK, SILV…LLTL, PFLS…STSS, LEFM…ISKL, INLK…LFSS, FKSL…SKIP, NLEN…LKNL, TKLE…FWNL, RLRR…VLVN, and SSVR…PLSI. Residue asparagine 213 is glycosylated (N-linked (GlcNAc...) asparagine). Asparagine 313 is a glycosylation site (N-linked (GlcNAc...) asparagine). N-linked (GlcNAc...) asparagine glycosylation is present at asparagine 363. An LRR 13; degenerate repeat occupies 388-407; it reads NLLSAWNNSFTGNIPLETCN. N-linked (GlcNAc...) asparagine glycans are attached at residues asparagine 394, asparagine 407, and asparagine 420. LRR repeat units follow at residues 408 to 434, 436 to 456, 457 to 481, 483 to 504, 505 to 529, 532 to 556, 601 to 625, 626 to 649, 650 to 673, and 675 to 698; these read RSSL…DFQE, LIVV…IFSD, GALL…LLNC, MLRF…WLKA, LPDL…DRGP, FPKL…YFVN, LTSY…IGLL, KALI…LANV, TELE…LKTL, and FLAY…QITG. Asparagine 480 carries N-linked (GlcNAc...) asparagine glycosylation. Asparagine 544 is a glycosylation site (N-linked (GlcNAc...) asparagine). Asparagine 632 and asparagine 648 each carry an N-linked (GlcNAc...) asparagine glycan. The chain crosses the membrane as a helical span at residues 741–761; that stretch reads AVVIGYWPGLLLGLIMAHVIA. Residues 762–808 lie on the Cytoplasmic side of the membrane; sequence SFKPKWLVKIVGPEKRKEDNPVRLFMTLDSRWDSFNNKKNVEQKSDM.

It belongs to the RLP family.

The protein resides in the cell membrane. In Arabidopsis thaliana (Mouse-ear cress), this protein is Receptor like protein 27.